Consider the following 195-residue polypeptide: Myelin-associated neurite-outgrowth inhibitor (195 aa).

Residues 1 to 18 (MNPVYSPASSGVPYANPK) lie on the Cytoplasmic side of the membrane. Residues 19 to 43 (GIGYPAGFPVGYAAAAPAYSPSMYP) form a helical membrane-spanning segment. Topologically, residues 44–143 (GANPAFPSGY…APPIPPPRPN (100 aa)) are extracellular. A helical membrane pass occupies residues 144–163 (GVTMGMVGGTTMAMSAGTLL). Residues 164 to 195 (TTHSPTPVAPHPSMPTYRQPATPTYSYVPPQW) are Cytoplasmic-facing.

The protein belongs to the FAM168 family.

It localises to the cytoplasm. The protein resides in the perinuclear region. The protein localises to the cell membrane. Its subcellular location is the cell projection. It is found in the axon. Its function is as follows. Inhibitor of neuronal axonal outgrowth. The sequence is that of Myelin-associated neurite-outgrowth inhibitor (fam168b) from Danio rerio (Zebrafish).